A 39-amino-acid chain; its full sequence is Photosystem II reaction center protein L (39 aa).

A helical membrane pass occupies residues Ser18–Phe38.

It belongs to the PsbL family. In terms of assembly, PSII is composed of 1 copy each of membrane proteins PsbA, PsbB, PsbC, PsbD, PsbE, PsbF, PsbH, PsbI, PsbJ, PsbK, PsbL, PsbM, PsbT, PsbX, PsbY, PsbZ, Psb30/Ycf12, at least 3 peripheral proteins of the oxygen-evolving complex and a large number of cofactors. It forms dimeric complexes.

The protein resides in the plastid. It localises to the organellar chromatophore thylakoid membrane. In terms of biological role, one of the components of the core complex of photosystem II (PSII). PSII is a light-driven water:plastoquinone oxidoreductase that uses light energy to abstract electrons from H(2)O, generating O(2) and a proton gradient subsequently used for ATP formation. It consists of a core antenna complex that captures photons, and an electron transfer chain that converts photonic excitation into a charge separation. This subunit is found at the monomer-monomer interface and is required for correct PSII assembly and/or dimerization. This is Photosystem II reaction center protein L from Paulinella chromatophora.